We begin with the raw amino-acid sequence, 962 residues long: Protease 3 (962 aa).

Positions 1–23 (MPRSTWFKALLLFVALWAPLSQA) are cleaved as a signal peptide. Residue histidine 88 coordinates Zn(2+). Residue glutamate 91 is the Proton acceptor of the active site. Zn(2+) contacts are provided by histidine 92 and glutamate 169.

The protein belongs to the peptidase M16 family. In terms of assembly, monomer. Requires Zn(2+) as cofactor.

It localises to the periplasm. It carries out the reaction Preferential cleavage of 16-Tyr-|-Leu-17 and 25-Phe-|-Tyr-26 bonds of oxidized insulin B chain. Also acts on other substrates of Mw less than 7 kDa such as insulin and glucagon.. In terms of biological role, endopeptidase that degrades small peptides of less than 7 kDa, such as glucagon and insulin. The protein is Protease 3 (ptrA) of Shigella flexneri.